We begin with the raw amino-acid sequence, 324 residues long: Lactonase drp35 (324 aa).

Ca(2+) contacts are provided by Glu-47, Ser-109, Gly-111, Asp-129, Thr-132, Tyr-134, Asp-137, Asn-184, Asp-235, and Ser-236. The active-site Proton donor is the Asp-235.

Belongs to the SMP-30/CGR1 family. It depends on Ca(2+) as a cofactor.

It localises to the cytoplasm. Exhibits lactonase activity. Acts in cells with perturbed membrane integrity and is possibly related to the membrane homeostasis. This Staphylococcus saprophyticus subsp. saprophyticus (strain ATCC 15305 / DSM 20229 / NCIMB 8711 / NCTC 7292 / S-41) protein is Lactonase drp35 (drp35).